A 405-amino-acid polypeptide reads, in one-letter code: Argininosuccinate synthase (405 aa).

Residues 10-18 and A37 contribute to the ATP site; that span reads AYSGGLDTS. The L-citrulline site is built by Y88 and S93. Residue G118 coordinates ATP. Residues T120, N124, and D125 each contribute to the L-aspartate site. Residue N124 participates in L-citrulline binding. Positions 128, 179, 188, 264, and 276 each coordinate L-citrulline.

The protein belongs to the argininosuccinate synthase family. Type 1 subfamily. Homotetramer.

The protein resides in the cytoplasm. It catalyses the reaction L-citrulline + L-aspartate + ATP = 2-(N(omega)-L-arginino)succinate + AMP + diphosphate + H(+). It functions in the pathway amino-acid biosynthesis; L-arginine biosynthesis; L-arginine from L-ornithine and carbamoyl phosphate: step 2/3. In Pseudomonas aeruginosa (strain LESB58), this protein is Argininosuccinate synthase.